We begin with the raw amino-acid sequence, 454 residues long: Venom prothrombin activator porpharin-D (454 aa).

Positions 1 to 20 (MAPQLLLCLILTFLWSLPEA) are cleaved as a signal peptide. A propeptide spanning residues 21-40 (ESNVFLKSKEANRFLQRTKR) is cleaved from the precursor. The region spanning 41–86 (SNSLFEEFRPGNIERECIEEKCSKEEAREIFKDNEKTEAFWNVYVD) is the Gla domain. 4-carboxyglutamate occurs at positions 46, 47, 54, 56, 59, 60, 65, 66, 69, and 75. Cysteines 57 and 62 form a disulfide. The EGF-like 1; calcium-binding domain occupies 86–122 (DGDQCSSNPCHYGGTCKDGIGSYTCTCLPNYEGKNCE). Disulfide bonds link Cys90–Cys101, Cys95–Cys110, Cys112–Cys121, Cys129–Cys140, Cys136–Cys149, Cys151–Cys164, Cys172–Cys316, Cys216–Cys221, Cys236–Cys252, Cys364–Cys378, and Cys389–Cys417. Ser92 is a glycosylation site (O-linked (Hex...) serine). Residues 129 to 164 (CRFFNGNCWHFCKPVQNDTQCSCAESYRLGDDGHSC) enclose the EGF-like 2 domain. Positions 182–209 (REASLPDFVQSQNATLLKKSDNPSPDIR) are cleaved as a propeptide — activation peptide. The Peptidase S1 domain maps to 210 to 441 (IINGMDCKLG…FIPWIKAVMR (232 aa)). Residues His251 and Asp296 each act as charge relay system in the active site. Catalysis depends on Ser393, which acts as the Charge relay system.

This sequence belongs to the peptidase S1 family. Snake venom subfamily. In terms of assembly, heterodimer of a light chain and a heavy chain; disulfide-linked. Post-translationally, the vitamin K-dependent, enzymatic carboxylation of some glutamate residues allows the modified protein to bind calcium. Expressed by the venom gland.

The protein resides in the secreted. The catalysed reaction is Selective cleavage of Arg-|-Thr and then Arg-|-Ile bonds in prothrombin to form thrombin.. Snake prothrombin activator that attacks the hemostatic system of prey. This protein is functionally similar to blood coagulation factor Xa. In Pseudechis porphyriacus (Red-bellied black snake), this protein is Venom prothrombin activator porpharin-D.